The chain runs to 491 residues: uncharacterized protein (491 aa).

The next 12 membrane-spanning stretches (helical) occupy residues 48–68, 85–105, 112–132, 140–160, 174–194, 202–222, 277–297, 317–337, 358–378, 383–403, 408–428, and 455–475; these read LILV…VAPC, ALIL…SAPL, RMLL…CGLA, IFRF…SGTI, AVMS…SGFI, WIFW…LPLL, PIVI…YLVL, LNYI…GIFI, VPVI…YGWT, THWI…MLGW, TYLI…ACCV, and LLAF…WFGG.

It belongs to the major facilitator superfamily.

The protein resides in the membrane. This is an uncharacterized protein from Schizosaccharomyces pombe (strain 972 / ATCC 24843) (Fission yeast).